The following is a 919-amino-acid chain: Transcriptional regulatory protein EDS1 (919 aa).

The disordered stretch occupies residues 1 to 54 (MSHHVPNLYGTPIRDPHERKRNSASMGEVNQSVSSRNCERGSEKGTKQRKKASH). The span at 23–36 (SASMGEVNQSVSSR) shows a compositional bias: polar residues. Residues 37 to 46 (NCERGSEKGT) are compositionally biased toward basic and acidic residues. The zn(2)-C6 fungal-type DNA-binding region spans 56-85 (CDQCRRKRIKCRFDKHTGVCQGCLEVGEKC). The tract at residues 297 to 338 (AGFPNKKLGTDGRSDKWDKNSTWKPVYRSSNPSHPSTEKNVS) is disordered. The span at 304 to 317 (LGTDGRSDKWDKNS) shows a compositional bias: basic and acidic residues. Residues 318 to 338 (TWKPVYRSSNPSHPSTEKNVS) show a composition bias toward polar residues.

This sequence belongs to the EDS1/RGT1 family. As to quaternary structure, binds DNA in a sequence-specific manner.

It localises to the nucleus. The chain is Transcriptional regulatory protein EDS1 (EDS1) from Saccharomyces cerevisiae (strain ATCC 204508 / S288c) (Baker's yeast).